We begin with the raw amino-acid sequence, 244 residues long: tRNA (guanine-N(1)-)-methyltransferase (244 aa).

S-adenosyl-L-methionine is bound by residues G120 and 140–145 (IGDYIL).

This sequence belongs to the RNA methyltransferase TrmD family. Homodimer.

Its subcellular location is the cytoplasm. The enzyme catalyses guanosine(37) in tRNA + S-adenosyl-L-methionine = N(1)-methylguanosine(37) in tRNA + S-adenosyl-L-homocysteine + H(+). Functionally, specifically methylates guanosine-37 in various tRNAs. This is tRNA (guanine-N(1)-)-methyltransferase from Brucella abortus (strain S19).